A 493-amino-acid chain; its full sequence is Cytochrome P450 Tp9025 (493 aa).

The helical; Signal-anchor for type II membrane protein transmembrane segment at 1–21 (MALYIIFLLIASSFILFSFIF) threads the bilayer. 2 N-linked (GlcNAc...) asparagine glycosylation sites follow: asparagine 209 and asparagine 411. Cysteine 433 lines the heme pocket.

Belongs to the cytochrome P450 family. The cofactor is heme.

It is found in the membrane. It participates in secondary metabolite biosynthesis; terpenoid biosynthesis. Its function is as follows. Probably involved in the biosynthesis of germacrene-derived sesquiterpene lactones. This Tanacetum parthenium (Feverfew) protein is Cytochrome P450 Tp9025.